The following is a 233-amino-acid chain: Octanoyltransferase (233 aa).

The BPL/LPL catalytic domain occupies 36–211 (DTTPDEIWLV…EFTRQLGYPT (176 aa)). Residues 75 to 82 (RGGQITYH), 142 to 144 (SLG), and 155 to 157 (GLA) contribute to the substrate site. C173 serves as the catalytic Acyl-thioester intermediate.

This sequence belongs to the LipB family.

The protein localises to the cytoplasm. It catalyses the reaction octanoyl-[ACP] + L-lysyl-[protein] = N(6)-octanoyl-L-lysyl-[protein] + holo-[ACP] + H(+). Its pathway is protein modification; protein lipoylation via endogenous pathway; protein N(6)-(lipoyl)lysine from octanoyl-[acyl-carrier-protein]: step 1/2. Its function is as follows. Catalyzes the transfer of endogenously produced octanoic acid from octanoyl-acyl-carrier-protein onto the lipoyl domains of lipoate-dependent enzymes. Lipoyl-ACP can also act as a substrate although octanoyl-ACP is likely to be the physiological substrate. This is Octanoyltransferase from Yersinia pseudotuberculosis serotype O:1b (strain IP 31758).